We begin with the raw amino-acid sequence, 97 residues long: Late embryogenesis abundant protein Lea5 (97 aa).

The protein belongs to the LEA type 3 family.

This Citrus sinensis (Sweet orange) protein is Late embryogenesis abundant protein Lea5 (LEA5).